The following is a 343-amino-acid chain: Glyceraldehyde-3-phosphate dehydrogenase (343 aa).

NAD(+)-binding positions include 13-14 and Gly-112; that span reads TI. 141 to 143 contacts D-glyceraldehyde 3-phosphate; that stretch reads SCN. Cys-142 serves as the catalytic Nucleophile. Position 170 (Arg-170) interacts with NAD(+). Position 196 to 197 (196 to 197) interacts with D-glyceraldehyde 3-phosphate; that stretch reads HA. Gln-303 contacts NAD(+).

It belongs to the glyceraldehyde-3-phosphate dehydrogenase family. As to quaternary structure, homotetramer.

Its subcellular location is the cytoplasm. The catalysed reaction is D-glyceraldehyde 3-phosphate + phosphate + NADP(+) = (2R)-3-phospho-glyceroyl phosphate + NADPH + H(+). The enzyme catalyses D-glyceraldehyde 3-phosphate + phosphate + NAD(+) = (2R)-3-phospho-glyceroyl phosphate + NADH + H(+). It participates in carbohydrate degradation; glycolysis; pyruvate from D-glyceraldehyde 3-phosphate: step 1/5. The chain is Glyceraldehyde-3-phosphate dehydrogenase (gap) from Aeropyrum pernix (strain ATCC 700893 / DSM 11879 / JCM 9820 / NBRC 100138 / K1).